The primary structure comprises 706 residues: Polyribonucleotide nucleotidyltransferase (706 aa).

Asp486 and Asp492 together coordinate Mg(2+). Positions 553 to 612 (PRIHTIKISTDKIKDVIGKGGSVIRALTEETGTTIEIEDDGTVRIASTDGEKAKHAIRRI) constitute a KH domain. One can recognise an S1 motif domain in the interval 622-690 (GRVYQGKVTR…RQGRVRLSIK (69 aa)).

It belongs to the polyribonucleotide nucleotidyltransferase family. As to quaternary structure, component of the RNA degradosome, which is a multiprotein complex involved in RNA processing and mRNA degradation. Mg(2+) serves as cofactor.

It is found in the cytoplasm. The enzyme catalyses RNA(n+1) + phosphate = RNA(n) + a ribonucleoside 5'-diphosphate. In terms of biological role, involved in mRNA degradation. Catalyzes the phosphorolysis of single-stranded polyribonucleotides processively in the 3'- to 5'-direction. This Pectobacterium atrosepticum (strain SCRI 1043 / ATCC BAA-672) (Erwinia carotovora subsp. atroseptica) protein is Polyribonucleotide nucleotidyltransferase.